A 424-amino-acid polypeptide reads, in one-letter code: Gamma-glutamyl phosphate reductase (424 aa).

Belongs to the gamma-glutamyl phosphate reductase family.

The protein localises to the cytoplasm. It catalyses the reaction L-glutamate 5-semialdehyde + phosphate + NADP(+) = L-glutamyl 5-phosphate + NADPH + H(+). It participates in amino-acid biosynthesis; L-proline biosynthesis; L-glutamate 5-semialdehyde from L-glutamate: step 2/2. Its function is as follows. Catalyzes the NADPH-dependent reduction of L-glutamate 5-phosphate into L-glutamate 5-semialdehyde and phosphate. The product spontaneously undergoes cyclization to form 1-pyrroline-5-carboxylate. This is Gamma-glutamyl phosphate reductase from Dehalococcoides mccartyi (strain ATCC BAA-2100 / JCM 16839 / KCTC 5957 / BAV1).